Here is a 134-residue protein sequence, read N- to C-terminus: Translation initiation factor 2 subunit beta (134 aa).

It belongs to the eIF-2-beta/eIF-5 family. Heterotrimer composed of an alpha, a beta and a gamma chain.

In terms of biological role, eIF-2 functions in the early steps of protein synthesis by forming a ternary complex with GTP and initiator tRNA. This Pyrobaculum calidifontis (strain DSM 21063 / JCM 11548 / VA1) protein is Translation initiation factor 2 subunit beta.